The chain runs to 152 residues: Large-conductance mechanosensitive channel (152 aa).

Helical transmembrane passes span 14–34 (VVDM…VKSL), 39–59 (LMPG…FLVI), and 85–105 (GLFI…FLVI).

It belongs to the MscL family. In terms of assembly, homopentamer.

The protein resides in the cell inner membrane. In terms of biological role, channel that opens in response to stretch forces in the membrane lipid bilayer. May participate in the regulation of osmotic pressure changes within the cell. This chain is Large-conductance mechanosensitive channel, found in Syntrophus aciditrophicus (strain SB).